The sequence spans 183 residues: Threonylcarbamoyl-AMP synthase (183 aa).

The YrdC-like domain occupies 1 to 183; it reads MNITQIIEKL…LFTNQLVRQG (183 aa).

This sequence belongs to the SUA5 family. TsaC subfamily.

The protein resides in the cytoplasm. The enzyme catalyses L-threonine + hydrogencarbonate + ATP = L-threonylcarbamoyladenylate + diphosphate + H2O. Its function is as follows. Required for the formation of a threonylcarbamoyl group on adenosine at position 37 (t(6)A37) in tRNAs that read codons beginning with adenine. Catalyzes the conversion of L-threonine, HCO(3)(-)/CO(2) and ATP to give threonylcarbamoyl-AMP (TC-AMP) as the acyladenylate intermediate, with the release of diphosphate. This is Threonylcarbamoyl-AMP synthase from Histophilus somni (strain 2336) (Haemophilus somnus).